Here is a 248-residue protein sequence, read N- to C-terminus: TPR repeat-containing protein slr0751 (248 aa).

TPR repeat units lie at residues 61–94 (PEAI…SPDS), 95–128 (PETH…DRYY), 129–162 (IPPY…DPNR), and 163–196 (YKAY…RPDY).

The polypeptide is TPR repeat-containing protein slr0751 (Synechocystis sp. (strain ATCC 27184 / PCC 6803 / Kazusa)).